The chain runs to 350 residues: Transmembrane protein 185A (350 aa).

The next 7 helical transmembrane spans lie at 16-36 (LIYA…DGII), 41-61 (WAVF…ASVG), 81-101 (FKAM…EVLV), 111-131 (FWLL…AACV), 177-197 (ILMS…VLFL), 211-231 (ITMA…EILL), and 240-260 (AFSC…LMAT). The mediates interaction with MAP1B stretch occupies residues 298-350 (DLHHEDSEETEETPVPEPPKIAPMFRKKARVVITQSPGKYVLPPPKLNIEMPD).

This sequence belongs to the TMEM185 family. Interacts with MAP1B. In terms of tissue distribution, broadly expressed in brain where it is specifically expressed by neurons (at protein level). Also detected in some cells of arterioles, intestine, lung and testis (at protein level).

It is found in the cell projection. The protein localises to the dendrite. Its subcellular location is the membrane. The protein is Transmembrane protein 185A (Tmem185a) of Mus musculus (Mouse).